Here is an 89-residue protein sequence, read N- to C-terminus: MKYILYSRCSFSFSFISNHLTPDGPSKIGWLDKGFIISSSTLYFSMTSNVVCETTFPAGKHIPGAGDGNCFVYPSNFDVEKDCLMVFIE.

This is an uncharacterized protein from Vaccinia virus (strain Copenhagen) (VACV).